We begin with the raw amino-acid sequence, 231 residues long: MRVKFHTTGETIMTQDELKKAVGWAALQYVQPGTIVGVGTGSTAAHFINALGTMKGQIEGAVSSSDASTEKLKSLGIHVFDLNEVDSLGIYVDGADEINGHMQMIKGGGAALTREKIIASVAEKFICIADASKQVDILGKFPLPVEVIPMARSAVARQLVKLGGRPEYRQGVVTDNGNVILDVHGMEILGPDSDGKRHKCDSWRGDCWFVANRGADVALIGTPDGVKTIVK.

Residues 40-43 (TGST), 93-96 (DGAD), and 106-109 (KGGG) contribute to the substrate site. Residue glutamate 115 is the Proton acceptor of the active site. Lysine 133 provides a ligand contact to substrate.

The protein belongs to the ribose 5-phosphate isomerase family. In terms of assembly, homodimer.

The enzyme catalyses aldehydo-D-ribose 5-phosphate = D-ribulose 5-phosphate. It participates in carbohydrate degradation; pentose phosphate pathway; D-ribose 5-phosphate from D-ribulose 5-phosphate (non-oxidative stage): step 1/1. In terms of biological role, catalyzes the reversible conversion of ribose-5-phosphate to ribulose 5-phosphate. The protein is Ribose-5-phosphate isomerase A of Escherichia coli O6:K15:H31 (strain 536 / UPEC).